The primary structure comprises 129 residues: Small ribosomal subunit protein uS11 (129 aa).

Belongs to the universal ribosomal protein uS11 family. Part of the 30S ribosomal subunit. Interacts with proteins S7 and S18. Binds to IF-3.

Its function is as follows. Located on the platform of the 30S subunit, it bridges several disparate RNA helices of the 16S rRNA. Forms part of the Shine-Dalgarno cleft in the 70S ribosome. The polypeptide is Small ribosomal subunit protein uS11 (Dechloromonas aromatica (strain RCB)).